A 389-amino-acid chain; its full sequence is MLLALAQWLQNDYSFLRVVNYLTFRAVMANLTALLIGLAFGPWVIRKLTELKVGQAVRTIGPQTHLVKAGTPTMGGVLVLVSIAVSTLLWCDWGNRFIWVVMLVTFGYGAIGWVDDYRKVVYRDPRGMSSREKFFWQTLIGLVAAVYLAFSVSESSNVRVWELFLNWVEGGLSLDMPYKSNLIVPFFKEISYPLGVAGFIVLTYLVIVGSSNAVNLTDGLDGLVIMPVVLVGGGLGVFAYVMGNSVYSKYLLFPHIPGAGELLIFCSALAGAGLAFLWFNAHPAQVFMGDVGALALGGALGTVAVIVRQEIVLFVMGGIFVVETLSVMAQVTWFKITKRRYGEGRRLFRMAPLHHHFELGGWKETQVTVRFWIITMLLVLIGLSTLKLR.

A run of 10 helical transmembrane segments spans residues 25–45, 74–94, 97–117, 134–154, 190–210, 222–242, 259–279, 286–306, 311–331, and 366–386; these read RAVM…PWVI, MGGV…CDWG, FIWV…VDDY, FFWQ…SVSE, ISYP…IVGS, GLVI…AYVM, AGEL…FLWF, VFMG…VAVI, IVLF…MAQV, and QVTV…LSTL.

Belongs to the glycosyltransferase 4 family. MraY subfamily. Mg(2+) serves as cofactor.

Its subcellular location is the cell inner membrane. It carries out the reaction UDP-N-acetyl-alpha-D-muramoyl-L-alanyl-gamma-D-glutamyl-meso-2,6-diaminopimeloyl-D-alanyl-D-alanine + di-trans,octa-cis-undecaprenyl phosphate = di-trans,octa-cis-undecaprenyl diphospho-N-acetyl-alpha-D-muramoyl-L-alanyl-D-glutamyl-meso-2,6-diaminopimeloyl-D-alanyl-D-alanine + UMP. The protein operates within cell wall biogenesis; peptidoglycan biosynthesis. Catalyzes the initial step of the lipid cycle reactions in the biosynthesis of the cell wall peptidoglycan: transfers peptidoglycan precursor phospho-MurNAc-pentapeptide from UDP-MurNAc-pentapeptide onto the lipid carrier undecaprenyl phosphate, yielding undecaprenyl-pyrophosphoryl-MurNAc-pentapeptide, known as lipid I. This Cupriavidus necator (strain ATCC 17699 / DSM 428 / KCTC 22496 / NCIMB 10442 / H16 / Stanier 337) (Ralstonia eutropha) protein is Phospho-N-acetylmuramoyl-pentapeptide-transferase.